The primary structure comprises 311 residues: p-hydroxybenzoic acid efflux pump subunit AaeA (311 aa).

Residues 11–31 (VGITVLVVVLAVIAIFNVWAF) traverse the membrane as a helical segment.

The protein belongs to the membrane fusion protein (MFP) (TC 8.A.1) family.

It is found in the cell inner membrane. Functionally, forms an efflux pump with AaeB. This is p-hydroxybenzoic acid efflux pump subunit AaeA from Yersinia pestis bv. Antiqua (strain Antiqua).